Here is a 151-residue protein sequence, read N- to C-terminus: Transcriptional repressor NrdR (151 aa).

The segment at 3–34 (CPYCAYGESKVVDSRSTEDGSSIRRRRECLKC) is a zinc-finger region. In terms of domain architecture, ATP-cone spans 49-139 (ILVIKKNMSR…VYRQFKDINT (91 aa)).

Belongs to the NrdR family. The cofactor is Zn(2+).

Its function is as follows. Negatively regulates transcription of bacterial ribonucleotide reductase nrd genes and operons by binding to NrdR-boxes. The sequence is that of Transcriptional repressor NrdR from Clostridium botulinum (strain ATCC 19397 / Type A).